A 285-amino-acid polypeptide reads, in one-letter code: Phosphate import ATP-binding protein PstB (285 aa).

Positions 22–262 (MRAVDLTLGF…PQHEETVRYF (241 aa)) constitute an ABC transporter domain. An ATP-binding site is contributed by 54 to 61 (GPTGSGKT). A disordered region spans residues 266–285 (RPAQGSDRGSSQTAGVAESQ). The span at 272 to 285 (DRGSSQTAGVAESQ) shows a compositional bias: polar residues.

Belongs to the ABC transporter superfamily. Phosphate importer (TC 3.A.1.7) family. In terms of assembly, the complex is composed of two ATP-binding proteins (PstB), two transmembrane proteins (PstC and PstA) and a solute-binding protein (PstS).

Its subcellular location is the cell membrane. The catalysed reaction is phosphate(out) + ATP + H2O = ADP + 2 phosphate(in) + H(+). In terms of biological role, part of the ABC transporter complex PstSACB involved in phosphate import. Responsible for energy coupling to the transport system. This is Phosphate import ATP-binding protein PstB from Mycobacterium intracellulare.